Here is a 342-residue protein sequence, read N- to C-terminus: Uroporphyrinogen decarboxylase (342 aa).

Substrate-binding positions include 24 to 28 (RQAGR), aspartate 74, tyrosine 151, serine 206, and histidine 322.

This sequence belongs to the uroporphyrinogen decarboxylase family. In terms of assembly, homodimer.

Its subcellular location is the cytoplasm. The enzyme catalyses uroporphyrinogen III + 4 H(+) = coproporphyrinogen III + 4 CO2. The protein operates within porphyrin-containing compound metabolism; protoporphyrin-IX biosynthesis; coproporphyrinogen-III from 5-aminolevulinate: step 4/4. Functionally, catalyzes the decarboxylation of four acetate groups of uroporphyrinogen-III to yield coproporphyrinogen-III. This is Uroporphyrinogen decarboxylase from Paracoccus denitrificans (strain Pd 1222).